Reading from the N-terminus, the 651-residue chain is A-type voltage-gated potassium channel KCND1 (651 aa).

Topologically, residues 1–183 are cytoplasmic; the sequence is MAAGVATWLP…RAFENPHTST (183 aa). Residues 2–20 are interaction with KCNIP1, KCNIP2, and other family members; it reads AAGVATWLPFARAAAVGWL. The Zn(2+) site is built by histidine 104, cysteine 131, and cysteine 132. A disordered region spans residues 144–164; that stretch reads AERLAEDEEAEQAGEGPALPA. A helical transmembrane segment spans residues 184 to 205; that stretch reads AALVFYYVTGFFIAVSVIANVV. Residues 206-230 lie on the Extracellular side of the membrane; sequence ETIPCRGTPRWPSKEQSCGDRFPTA. A helical membrane pass occupies residues 231-252; that stretch reads FFCMDTACVLIFTGEYLLRLFA. Residues 253–263 are Cytoplasmic-facing; that stretch reads APSRCRFLRSV. A helical membrane pass occupies residues 264–284; sequence MSLIDVVAILPYYIGLFVPKN. The Extracellular portion of the chain corresponds to 285-287; that stretch reads DDV. Residues 288–308 form a helical; Voltage-sensor membrane-spanning segment; that stretch reads SGAFVTLRVFRVFRIFKFSRH. The Cytoplasmic segment spans residues 309–323; sequence SQGLRILGYTLKSCA. The segment at 310 to 323 is S4-S5 linker; it reads QGLRILGYTLKSCA. A helical transmembrane segment spans residues 324–345; the sequence is SELGFLLFSLTMAIIIFATVMF. Residues 346–359 are Extracellular-facing; it reads YAEKGTSKTNFTSI. A glycan (N-linked (GlcNAc...) asparagine) is linked at asparagine 355. Residues 360–371 constitute an intramembrane region (helical); that stretch reads PAAFWYTIVTMT. The Selectivity filter motif lies at 372–377; it reads TLGYGD. Residues 372–379 lie within the membrane without spanning it; the sequence is TLGYGDMV. The Extracellular segment spans residues 380–386; that stretch reads PSTIAGK. A helical membrane pass occupies residues 387–415; the sequence is IFGSICSLSGVLVIALPVPVIVSNFSRIY. At 416–651 the chain is on the cytoplasmic side; the sequence is HQNQRADKRR…LPETVKISSL (236 aa). Serine 458 carries the post-translational modification Phosphoserine. A required for dendritic targeting region spans residues 474–489; sequence FEQQHHHLLHCLEKTT. Serine 555 is modified (phosphoserine). Disordered stretches follow at residues 566 to 585 and 601 to 651; these read RRSP…HDSL and IPTP…ISSL. The segment covering 626 to 637 has biased composition (polar residues); sequence TPNTTLRNSSLG.

This sequence belongs to the potassium channel family. D (Shal) (TC 1.A.1.2) subfamily. Kv4.1/KCND1 sub-subfamily. In terms of assembly, component of heteromultimeric potassium channels. Identified in potassium channel complexes containing KCND1, KCND2, KCND3, KCNIP1, KCNIP2, KCNIP3, KCNIP4, DPP6 and DPP10.

Its subcellular location is the cell membrane. It catalyses the reaction K(+)(in) = K(+)(out). In terms of biological role, A-type voltage-gated potassium channel that mediates transmembrane potassium transport in excitable membranes in the brain. Mediates A-type current I(SA) in suprachiasmatic nucleus (SCN) neurons. Exhibits a low-threshold A-type current with a hyperpolarized steady-state inactivation midpoint and the recovery process was steeply voltage-dependent, with recovery being markedly faster at more negative potentials. May regulates repetitive firing rates in the suprachiasmatic nucleus (SCN) neurons and circadian rhythms in neuronal excitability and behavior. Contributes to the regulation of the circadian rhythm of action potential firing in suprachiasmatic nucleus neurons, which regulates the circadian rhythm of locomotor activity. The regulatory subunit KCNIP1 modulates the kinetics of channel inactivation, increases the current amplitudes and accelerates recovery from inactivation, shifts activation in a depolarizing direction. The regulatory subunit DPP10 decreases the voltage sensitivity of the inactivation channel gating. In Mus musculus (Mouse), this protein is A-type voltage-gated potassium channel KCND1.